Reading from the N-terminus, the 1483-residue chain is Neuropathy target esterase sws (1483 aa).

Topologically, residues 1–34 (MDVLELLRASANGCYNTLFSDAWFQYVSKQIATT) are lumenal. A helical membrane pass occupies residues 35 to 55 (MYWYGALLVIGVLFIAWFLYF). Over 56-1483 (KRLARLRLRD…ENLTKTDTKN (1428 aa)) the chain is Cytoplasmic. Position 174–301 (174–301 (IFGHFEKPIF…IRVIQVIMIR (128 aa))) interacts with a nucleoside 3',5'-cyclic phosphate. 2 disordered regions span residues 348–380 (ASRP…PNAN) and 404–440 (SSAV…GTSI). Over residues 413–440 (GTRRSSTTYGPSGESPNGNANTAPGTSI) the composition is skewed to polar residues. Residues Ser-418 and Ser-424 each carry the phosphoserine modification. A nucleoside 3',5'-cyclic phosphate is bound by residues 456-585 (ELGL…VVRR) and 574-701 (IVLD…LSHR). The 167-residue stretch at 927-1093 (LVLGGGGARG…VNNLPGHLWR (167 aa)) folds into the PNPLA domain. The GXGXXG motif lies at 931-936 (GGGARG). Positions 958 to 962 (GVSIG) match the GXSXG motif. Residue Ser-960 is the Nucleophile of the active site. The active-site Proton acceptor is Asp-1080. Residues 1080-1082 (DGG) carry the DGA/G motif. A Phosphoserine modification is found at Ser-1174. The disordered stretch occupies residues 1349 to 1483 (DKATQSTPPT…ENLTKTDTKN (135 aa)). The span at 1351-1373 (ATQSTPPTPNKQHALSPTSSQTN) shows a compositional bias: polar residues. Residues 1382–1396 (KPKEKQPSYDKLDRE) show a composition bias toward basic and acidic residues. Low complexity predominate over residues 1410-1419 (ERSSMQQRDS). Residues 1445–1458 (LNKPEQQPEQKPVP) are compositionally biased toward basic and acidic residues. Residues 1465 to 1474 (QKQQDQQQQE) are compositionally biased toward low complexity.

Belongs to the NTE family. In terms of assembly, interacts with Pka-C3; interaction inhibits the catalytic function of Pka-C3 and the esterase activity of sws.

It localises to the endoplasmic reticulum membrane. The enzyme catalyses a 1-acyl-sn-glycero-3-phosphocholine + H2O = sn-glycerol 3-phosphocholine + a fatty acid + H(+). Functionally, phospholipase B that deacylates intracellular phosphatidylcholine (PtdCho), generating glycerophosphocholine (GroPtdCho). This deacylation occurs at both sn-2 and sn-1 positions of PtdCho. Its specific chemical modification by certain organophosphorus (OP) compounds leads to distal axonopathy. Plays a role in the signaling mechanism between neurons and glia that regulates glia wrapping during development of the adult brain. Essential for membrane lipid homeostasis and cell survival in both neurons and glia of the adult brain. The chain is Neuropathy target esterase sws from Drosophila virilis (Fruit fly).